A 203-amino-acid polypeptide reads, in one-letter code: Arcadin-2 (203 aa).

As to quaternary structure, interacts with crenactin.

It is found in the cytoplasm. It localises to the cytoskeleton. In terms of biological role, part of an actin-like archaeal cytoskeleton. Prevents polymerization of crenactin filaments by binding its C-terminus into crenactin's hydrophobic groove. May act by competing with the D-loop of the following crenactin subunit for the hydrophobic groove. The chain is Arcadin-2 from Pyrobaculum calidifontis (strain DSM 21063 / JCM 11548 / VA1).